Consider the following 156-residue polypeptide: Small ribosomal subunit protein uS7 (156 aa).

The protein belongs to the universal ribosomal protein uS7 family. Part of the 30S ribosomal subunit. Contacts proteins S9 and S11.

Functionally, one of the primary rRNA binding proteins, it binds directly to 16S rRNA where it nucleates assembly of the head domain of the 30S subunit. Is located at the subunit interface close to the decoding center, probably blocks exit of the E-site tRNA. This chain is Small ribosomal subunit protein uS7, found in Clostridium perfringens (strain ATCC 13124 / DSM 756 / JCM 1290 / NCIMB 6125 / NCTC 8237 / Type A).